Here is an 88-residue protein sequence, read N- to C-terminus: Alkene monooxygenase system, oxygenase component subunit gamma (88 aa).

It belongs to the TmoB/XamoB family. As to quaternary structure, the alkene monooxygenase multicomponent enzyme system is composed of an electron transfer component and a monooxygenase component interacting with the effector protein XamoD. The electron transfer component is composed of a ferredoxin reductase (XamoF) and a ferredoxin (XamoC), and the monooxygenase component is formed by a heterohexamer (dimer of heterotrimers) of two alpha subunits (XamoA), two beta subunits (XamoE) and two gamma subunits (XamoB).

Its subcellular location is the cytoplasm. The enzyme catalyses propene + NADH + O2 + H(+) = 1,2-epoxypropane + NAD(+) + H2O. Its activity is regulated as follows. Inhibited by propyne. Its function is as follows. Component of the alkene monooxygenase multicomponent enzyme system which catalyzes the O2- and NADH-dependent epoxidation of short chain (C2 to C6) alkenes to their corresponding epoxides. Also able to catalyze the oxidation of a number of chlorinated alkenes, including trichloroethylene, cis- and trans-1,2-dichloroethylene, vinyl chloride, 1-chloropropylene, 1,3-dichloropropylene and 2,3-dichloropropylene. In Xanthobacter autotrophicus (strain ATCC BAA-1158 / Py2), this protein is Alkene monooxygenase system, oxygenase component subunit gamma.